Here is a 602-residue protein sequence, read N- to C-terminus: Threonine--tRNA ligase (602 aa).

The segment at Asp-208–Pro-499 is catalytic. Residues Cys-300, His-351, and His-476 each coordinate Zn(2+).

The protein belongs to the class-II aminoacyl-tRNA synthetase family. Homodimer. Zn(2+) serves as cofactor.

Its subcellular location is the cytoplasm. The catalysed reaction is tRNA(Thr) + L-threonine + ATP = L-threonyl-tRNA(Thr) + AMP + diphosphate + H(+). In terms of biological role, catalyzes the attachment of threonine to tRNA(Thr) in a two-step reaction: L-threonine is first activated by ATP to form Thr-AMP and then transferred to the acceptor end of tRNA(Thr). Also edits incorrectly charged L-seryl-tRNA(Thr). The polypeptide is Threonine--tRNA ligase (Campylobacter jejuni subsp. jejuni serotype O:6 (strain 81116 / NCTC 11828)).